The primary structure comprises 204 residues: Minor allergen Cla h 7 (204 aa).

The region spanning 5 to 195 (IAIIFYSTWG…ELTAQGKAFY (191 aa)) is the Flavodoxin-like domain.

This sequence belongs to the WrbA family.

It is found in the cytoplasm. This Davidiella tassiana (Mycosphaerella tassiana) protein is Minor allergen Cla h 7 (CLAH7).